We begin with the raw amino-acid sequence, 415 residues long: Styrene monooxygenase StyA (415 aa).

It belongs to the StyA family. In terms of assembly, homodimer. A direct interaction with the monooxygenase reductase component StyB seems not to be necessary for the enzymatic activity.

It carries out the reaction styrene + FADH2 + O2 = (S)-styrene oxide + FAD + H2O + H(+). It participates in aromatic compound metabolism. Functionally, styrene monooxygenase which catalyzes the first step in the aerobic styrene degradation pathway by enantioselective epoxidation of the vinyl side chain. In a two-component system, a reductase utilizes NADH to reduce FAD, which is then transferred to the oxygenase; the electron transfer is proposed to occur via a diffusing flavin. The sequence is that of Styrene monooxygenase StyA (styA) from Pseudomonas sp.